The following is a 154-amino-acid chain: MNYHQYYPVDIVNGPGTRCTLFVSGCVHECPGCYNKSTWRVNSGQPFTKAMEDQIINDLNDTRIKRQGISLSGGDPLHPQNVPDILKLVQRIRAECPGKDIWVWTGYKLDELNAAQMQVVDLINVLVDGKFVQDLKDPSLIWRGSSNQVVHHLR.

Positions 26, 30, and 33 each coordinate [4Fe-4S] cluster. Residues 32–34 (GCY) and G74 contribute to the S-adenosyl-L-methionine site.

It belongs to the organic radical-activating enzymes family. Forms a tetramer composed of two NrdD and two NrdG subunits. [4Fe-4S] cluster is required as a cofactor.

It is found in the cytoplasm. The enzyme catalyses glycyl-[protein] + reduced [flavodoxin] + S-adenosyl-L-methionine = glycin-2-yl radical-[protein] + semiquinone [flavodoxin] + 5'-deoxyadenosine + L-methionine + H(+). In terms of biological role, activation of anaerobic ribonucleoside-triphosphate reductase under anaerobic conditions by generation of an organic free radical, using S-adenosylmethionine and reduced flavodoxin as cosubstrates to produce 5'-deoxy-adenosine. This Escherichia coli O157:H7 protein is Anaerobic ribonucleoside-triphosphate reductase-activating protein (nrdG).